We begin with the raw amino-acid sequence, 381 residues long: 5-cytosine rRNA methyltransferase NSUN4 (381 aa).

The N-terminal 25 residues, Met-1–Tyr-25, are a transit peptide targeting the mitochondrion. Residues Gly-182, Gly-183, Lys-184, and Asp-201 each contribute to the S-adenosyl-L-methionine site. Position 203 is a phosphoserine (Ser-203). Positions 206, 234, 235, and 252 each coordinate S-adenosyl-L-methionine. Catalysis depends on Cys-307, which acts as the Nucleophile.

This sequence belongs to the class I-like SAM-binding methyltransferase superfamily. RsmB/NOP family. In terms of assembly, heterodimer with MTERFD2/MTERF4; this interaction seems to be required for NSUN4 recruitment to the mitochondrial large ribosomal subunit.

It localises to the mitochondrion. The catalysed reaction is a cytidine in rRNA + S-adenosyl-L-methionine = a 5-methylcytidine in rRNA + S-adenosyl-L-homocysteine + H(+). It carries out the reaction a cytidine in mRNA + S-adenosyl-L-methionine = a 5-methylcytidine in mRNA + S-adenosyl-L-homocysteine + H(+). Its function is as follows. Mitochondrial RNA cytosine C(5)-methyltransferase that methylates cytosine to 5-methylcytosine (m5C) in various RNAs, such as rRNAs, mRNAs and some long non-coding RNAs (lncRNAs). Involved in mitochondrial ribosome small subunit (SSU) maturation by catalyzing methylation of mitochondrial 12S rRNA; the function is independent of MTERFD2/MTERF4 and assembled mitochondrial ribosome large subunit (LSU). Targeted to LSU by MTERFD2/MTERF4 and probably is involved in a final step in ribosome biogenesis to ensure that SSU and LSU are assembled. In vitro can methylate 16S rRNA of the LSU; the methylation is enhanced by MTERFD/MTERF4. Also acts as a regulator of innate immunity by marking double-stranded mitochondrial RNAs(mt-dsRNAs) generated in response to stress: catalyzes m5C modification on mitochondrial RNAs, such as a mRNAs and lncRNAs, with a preference for the termini of light-strand lncRNAs, promoting their degradation and cytosolic release. Modified light-strand lncRNAs are then recognized by C1QBP reader and recruited to the mitochondrial degradosome complex, which promotes their degradation. In Mus musculus (Mouse), this protein is 5-cytosine rRNA methyltransferase NSUN4.